The chain runs to 460 residues: Heme sensor protein HssS (460 aa).

2 helical membrane-spanning segments follow: residues 11–31 and 164–184; these read IYTITVMIFSAVASFLCTNII and IFLAILITLLLLFSIILVISS. Positions 186–238 constitute an HAMP domain; sequence YAIIKPIQQLKRATERLMHGNFDEVIHVTRKDEFGTLQYRFDKMRLSLKQLDD. Positions 246–456 constitute a Histidine kinase domain; that stretch reads NVSHEIKTPL…TFTITFKKVP (211 aa). His-249 carries the post-translational modification Phosphohistidine; by autocatalysis.

Post-translationally, autophosphorylated.

The protein resides in the cell membrane. It carries out the reaction ATP + protein L-histidine = ADP + protein N-phospho-L-histidine.. Its function is as follows. Member of the two-component regulatory system HssS/HssR involved in intracellular heme homeostasis and tempering of staphylococcal virulence. HssS functions as a heme sensor histidine kinase which is autophosphorylated at a histidine residue and transfers its phosphate group to an aspartate residue of HssR. HssR/HssS activates the expression of hrtAB, an efflux pump, in response to extracellular heme, hemin, hemoglobin or blood. This chain is Heme sensor protein HssS (hssS), found in Staphylococcus saprophyticus subsp. saprophyticus (strain ATCC 15305 / DSM 20229 / NCIMB 8711 / NCTC 7292 / S-41).